The primary structure comprises 24 residues: 29 kDa outer membrane protein (24 aa).

The protein localises to the cell outer membrane. May be involved in transporting molecules across the outer membrane. The sequence is that of 29 kDa outer membrane protein from Acinetobacter baumannii.